Reading from the N-terminus, the 386-residue chain is MSAWVLPDHIADVLPSEARHIEELRRQLLDTARGYGYELVMPPLLEHLESLLSGTGEALDLQTFKLVDQLSGRSMGLRADTTPQVARIDAHLLNREGVARLCYCGPVLHTRPDRPHATREPLQFGAEIYGHAGLEADTEVLLLALDCLHASGLSDGVIVDLADARIVRALFAGVPVDAAVLARVHAALVAKDASELHALTRSFPAASRDGLRALVQLYGDASVLDEAAKALKGTPAVSAALAGLKQLAASLGADPARQISFDLADLRGYAYYSGMRFGIYVPGAADALVRGGRYDEVGAVFGRNRPAVGFSLDVRELVGVLPARPLRAAIRAPWSDAAGLREAIAGLRKAGEIVVCVLPGHGSEIDEFHCDRELVEHAGQWQVRAL.

The protein belongs to the class-II aminoacyl-tRNA synthetase family. HisZ subfamily. As to quaternary structure, heteromultimer composed of HisG and HisZ subunits.

The protein localises to the cytoplasm. It functions in the pathway amino-acid biosynthesis; L-histidine biosynthesis; L-histidine from 5-phospho-alpha-D-ribose 1-diphosphate: step 1/9. Its function is as follows. Required for the first step of histidine biosynthesis. May allow the feedback regulation of ATP phosphoribosyltransferase activity by histidine. The chain is ATP phosphoribosyltransferase regulatory subunit from Variovorax paradoxus (strain S110).